An 857-amino-acid chain; its full sequence is Linoleate 9S-lipoxygenase 6 (857 aa).

The 131-residue stretch at N26 to A156 folds into the PLAT domain. The region spanning P159–I857 is the Lipoxygenase domain. The tract at residues N205 to E243 is disordered. Residues Q208–G218 are compositionally biased toward polar residues. Fe cation is bound by residues H518, H523, H709, N713, and I857.

The protein belongs to the lipoxygenase family. In terms of assembly, monomer. Fe cation serves as cofactor. In terms of tissue distribution, expressed in tubers and roots. Detected in leaves, petioles and stems.

The protein resides in the cytoplasm. The catalysed reaction is (9Z,12Z)-octadecadienoate + O2 = (9S)-hydroperoxy-(10E,12Z)-octadecadienoate. It functions in the pathway lipid metabolism; oxylipin biosynthesis. Its function is as follows. Plant lipoxygenases may be involved in a number of diverse aspects of plant physiology including growth and development, pest resistance, and senescence or responses to wounding. Catalyzes the hydroperoxidation of lipids containing a cis,cis-1,4-pentadiene structure. Linoleic and linolenic acids are the preferred substrates, but is also active with arachidonic acid. The products are almost exclusively the S enantiomers. This is Linoleate 9S-lipoxygenase 6 (LOX1.6) from Solanum tuberosum (Potato).